The following is a 292-amino-acid chain: Proteasome subunit beta 2 (292 aa).

Positions 1-59 (MTVDRAPRITDGDTRLSFGSNLSSFSEYLRVHAPEHLPQNRFADTGGVVMGGGDVAPHG) are cleaved as a propeptide — removed in mature form; by autocatalysis. The active-site Nucleophile is T60.

The protein belongs to the peptidase T1B family. The 20S proteasome core is composed of 14 alpha and 14 beta subunits that assemble into four stacked heptameric rings, resulting in a barrel-shaped structure. The two inner rings, each composed of seven catalytic beta subunits, are sandwiched by two outer rings, each composed of seven alpha subunits. All four combinations of alpha- and beta-subunits (beta2-alpha1, beta2-alpha2, beta1-alpha2 and beta1-alpha1) yield fully assembled and proteolytically active proteasomes. The catalytic chamber with the active sites is on the inside of the barrel. Has probably a gated structure, the ends of the cylinder being occluded by the N-termini of the alpha-subunits. Is likely capped by the proteasome-associated ATPase, ARC.

It localises to the cytoplasm. It catalyses the reaction Cleavage of peptide bonds with very broad specificity.. The protein operates within protein degradation; proteasomal Pup-dependent pathway. The formation of the proteasomal ATPase ARC-20S proteasome complex, likely via the docking of the C-termini of ARC into the intersubunit pockets in the alpha-rings, may trigger opening of the gate for substrate entry. Interconversion between the open-gate and close-gate conformations leads to a dynamic regulation of the 20S proteasome proteolysis activity. In terms of biological role, component of the proteasome core, a large protease complex with broad specificity involved in protein degradation. The R.erythropolis proteasomes are able to cleave oligopeptides after Tyr, Phe and Leu, very poorly after Arg but not after Glu. Thus, displays chymotrypsin-like activity, low trypsin-like activity but no caspase-like activity. The polypeptide is Proteasome subunit beta 2 (Rhodococcus erythropolis (Arthrobacter picolinophilus)).